The following is a 340-amino-acid chain: Glycerol-3-phosphate dehydrogenase [NAD(P)+] (340 aa).

Residues Ser-23, Trp-24, Arg-43, Lys-44, and Lys-113 each contribute to the NADPH site. Residues Lys-113, Gly-141, and Thr-143 each contribute to the sn-glycerol 3-phosphate site. Residue Ala-145 coordinates NADPH. Sn-glycerol 3-phosphate-binding residues include Lys-196, Asp-249, Ser-259, Arg-260, and Asn-261. The active-site Proton acceptor is Lys-196. Residue Arg-260 coordinates NADPH. Glu-286 serves as a coordination point for NADPH.

The protein belongs to the NAD-dependent glycerol-3-phosphate dehydrogenase family.

It localises to the cytoplasm. It carries out the reaction sn-glycerol 3-phosphate + NAD(+) = dihydroxyacetone phosphate + NADH + H(+). The catalysed reaction is sn-glycerol 3-phosphate + NADP(+) = dihydroxyacetone phosphate + NADPH + H(+). Its pathway is membrane lipid metabolism; glycerophospholipid metabolism. Functionally, catalyzes the reduction of the glycolytic intermediate dihydroxyacetone phosphate (DHAP) to sn-glycerol 3-phosphate (G3P), the key precursor for phospholipid synthesis. In Zymomonas mobilis subsp. mobilis (strain ATCC 31821 / ZM4 / CP4), this protein is Glycerol-3-phosphate dehydrogenase [NAD(P)+].